A 115-amino-acid chain; its full sequence is ER exit protein (115 aa).

This sequence belongs to the STEEP1 family.

Its function is as follows. May stimulate membrane curvature formation and subsequent endoplasmic reticulum exit site (ERES) establishment. In Schizosaccharomyces pombe (strain 972 / ATCC 24843) (Fission yeast), this protein is ER exit protein.